The sequence spans 331 residues: MNLKNRHFLKLLDFTPEEITAYLDLAAELKAAKKAGREIQRMKGKNIALIFEKTSTRTRCAFEVAARDQGAGVTYLEPSASQIGHKESIKDTARVLGRMYDAIEYRGFGQEVVEELAKYAGVPVFNGLTNEFHPTQMLADALTMREHSGKPLNQTAFAYVGDARYNMGNSLLILGAKLGMDVRIGAPQSLWPSEGIIAAAHAAAKETGAKITLTENAHEAVKNVDFIHTDVWVSMGEPKEVWQERIDLLKDYRVTPELMAASGNPQVKFMHCLPAFHNRETKVGEWIYETFGLNGVEVTEEIFESPASIVFDQAENRMHTIKAVMVAALGD.

Carbamoyl phosphate is bound by residues 55–58 (STRT), Gln82, Arg106, and 133–136 (HPTQ). Residues Asn166, Asp230, and 234 to 235 (SM) each bind L-ornithine. Residues 272–273 (CL) and Arg317 each bind carbamoyl phosphate.

Belongs to the aspartate/ornithine carbamoyltransferase superfamily. OTCase family.

It is found in the cytoplasm. The enzyme catalyses carbamoyl phosphate + L-ornithine = L-citrulline + phosphate + H(+). It participates in amino-acid biosynthesis; L-arginine biosynthesis; L-arginine from L-ornithine and carbamoyl phosphate: step 1/3. Functionally, reversibly catalyzes the transfer of the carbamoyl group from carbamoyl phosphate (CP) to the N(epsilon) atom of ornithine (ORN) to produce L-citrulline. The sequence is that of Ornithine carbamoyltransferase (argF) from Neisseria meningitidis serogroup B (strain ATCC BAA-335 / MC58).